A 504-amino-acid chain; its full sequence is MTAEGRYLEIRKKTVKSKFRFPASSSSTRCLICSAQATGFHFEAQSCSACAAFFRRTVALTKSFKCITGRDDCNVHYSMHQICRSCRHKKCLSNGMKPGGVQPKKPNIETGRAFFTKSGLKRNKKFANVSPQTADEQKLVVEGVKVPKIEVQEPNSLEDLEQDNEFVIKTPTPRKISSSTSFSASTTTNYSTPGPSPMAPCSAGPDVLTLFIREEMKLGERRRLLFSERAVGTLLGQNKHCPYKKEDIKPLVFHDFRLTIKTHIMLVYEWLQTWPELQELDDFDRMSLLRKAVLIHFLLDPSFLSYQIGEPDKLIMQNGGFISTADHHGVGWEDETDISGENKRKYYVPIMKQITDEIMPAMEAMKITFEEFVALKALACFQGGFENVSEAKRHLITQQVNRIMTSLHTHYLENSEEKIAERFGTIVLMLSNIFTAGNDFVQNHREIDIFHIWDLDKLVLQLLNLDKIMETEARETAEKRAMRNGINVVNNNNDVLLGQAKLEK.

Residues Ser27 to Pro103 constitute a DNA-binding region (nuclear receptor). 2 consecutive NR C4-type zinc fingers follow at residues Cys30 to Cys50 and Cys66 to Cys86. The span at Ser177–Thr192 shows a compositional bias: low complexity. The tract at residues Ser177–Ala199 is disordered. An NR LBD domain is found at Glu214–Asp466. Residues Leu455–Asp466 are AF-2.

This sequence belongs to the nuclear hormone receptor family. As to quaternary structure, interacts with nuclear hormone receptor nhr-49; the interaction is direct. As to expression, expressed in the intestine and in some head and tail neurons, as well as the ventral nerve cord.

It is found in the nucleus. Functionally, transcription factor. Binds to regulatory elements and regulates transcription of target genes, including acyltransferase dgat-2. As part of a lysosome-to-nucleus retrograde lipid signaling pathway, acts as a direct nuclear receptor of oleoylethanolamide (OEA) and, acting in concert with nuclear hormone receptor nhr-49, activates the transcription of genes promoting longevity and mitochondrial beta-oxidation. Required to modulate expression of delta-9 fatty acid desaturases, thereby regulating lipid metabolism; in some contexts, acting in concert with nhr-49. Involved in modulation of lipid metabolism in response to the citrate-induced mitochondrial unfolded protein response (mtUPR), acting downstream of transcription factor dve-1 and ubiquitin-like protein 5. Plays a role in modulating mitochondrial morphology and function. Involved in positively modulating life-span in a germline-dependent manner, acting in concert with nuclear hormone receptor daf-12. Plays a role in transgenerational lipid accumulation in response to a high-fat diet. This is Nuclear hormone receptor family member nhr-80 from Caenorhabditis elegans.